The chain runs to 853 residues: Auxin response factor 23 (853 aa).

Residues Pro-118 to His-141 are disordered. The TF-B3 DNA-binding region spans Phe-149 to Met-251. Disordered regions lie at residues Glu-422 to Met-484 and Pro-647 to Ser-723. Residues Pro-425–Lys-455 show a composition bias toward polar residues. Positions Glu-672 to Asp-686 are enriched in basic and acidic residues. Polar residues predominate over residues Pro-706 to Ser-723. One can recognise a PB1 domain in the interval Arg-725–Glu-809. Residues Pro-815 to Cys-853 are disordered. The segment covering Leu-843–Cys-853 has biased composition (polar residues).

The protein belongs to the ARF family. As to quaternary structure, homodimers and heterodimers. Interacts with CRL1. As to expression, expressed in roots, culms, leaves and young panicles.

The protein localises to the nucleus. Auxin response factors (ARFs) are transcriptional factors that bind specifically to the DNA sequence 5'-TGTCTC-3' found in the auxin-responsive promoter elements (AuxREs). The chain is Auxin response factor 23 (ARF23) from Oryza sativa subsp. japonica (Rice).